Reading from the N-terminus, the 188-residue chain is Peptide deformylase (188 aa).

Residues C109 and H152 each contribute to the Fe cation site. E153 is an active-site residue. H156 provides a ligand contact to Fe cation.

Belongs to the polypeptide deformylase family. Requires Fe(2+) as cofactor.

The enzyme catalyses N-terminal N-formyl-L-methionyl-[peptide] + H2O = N-terminal L-methionyl-[peptide] + formate. Removes the formyl group from the N-terminal Met of newly synthesized proteins. Requires at least a dipeptide for an efficient rate of reaction. N-terminal L-methionine is a prerequisite for activity but the enzyme has broad specificity at other positions. This is Peptide deformylase from Chloroflexus aurantiacus (strain ATCC 29366 / DSM 635 / J-10-fl).